The primary structure comprises 670 residues: PML-RARA-regulated adapter molecule 1 (670 aa).

The disordered stretch occupies residues 1 to 561 (MAHHLPAAME…PQQLPPMDPK (561 aa)). Over residues 31-43 (DLPKKPPKPEFGK) the composition is skewed to basic and acidic residues. Repeat copies occupy residues 70–81 (KPPPPEVTDLPK), 82–93 (KPPPPEVTDLPK), 94–105 (KPPPPEVTDLPK), and 106–117 (KPPPPEVTDLPK). A 4 X 12 AA repeats of K-P-P-[PQ]-P-[EQ]-[VAF]-T-D-L-P-K region spans residues 70 to 165 (KPPPPEVTDL…SLPEPGAPAR (96 aa)). The span at 114-129 (DLPKKPSKLELSDLSK) shows a compositional bias: basic and acidic residues. S340 carries the phosphoserine modification. Positions 386–398 (SSASESSLPAAVA) are enriched in low complexity. Pro residues predominate over residues 454–463 (PAKPPLPPGP). Residues 504-514 (EIYELYDDVEP) are compositionally biased toward acidic residues. The segment covering 515-528 (RDDSSPSPKGRDEA) has biased composition (basic and acidic residues). The region spanning 571–649 (KAEREFRKKF…PRTALLPLET (79 aa)) is the SH3 domain.

Interacts with SKAP2, LCP2 and DBNL. May interact with LYN. Interacts with NEK6. May be phosphorylated on tyrosines. In terms of tissue distribution, expressed in peripheral blood leukocytes and bone marrow. Expressed in monocytes, and to a lesser extent in granulocytes and lymphocytes. Not expressed in non hematopoietic tissues except in lung.

May be involved in myeloid differentiation. May be involved in integrin signaling in neutrophils. Binds to PtdIns(4)P. The chain is PML-RARA-regulated adapter molecule 1 (PRAM1) from Homo sapiens (Human).